The chain runs to 323 residues: Phosphate acyltransferase (323 aa).

The protein belongs to the PlsX family. As to quaternary structure, homodimer. Probably interacts with PlsY.

It is found in the cytoplasm. The catalysed reaction is a fatty acyl-[ACP] + phosphate = an acyl phosphate + holo-[ACP]. It participates in lipid metabolism; phospholipid metabolism. Functionally, catalyzes the reversible formation of acyl-phosphate (acyl-PO(4)) from acyl-[acyl-carrier-protein] (acyl-ACP). This enzyme utilizes acyl-ACP as fatty acyl donor, but not acyl-CoA. The polypeptide is Phosphate acyltransferase (Finegoldia magna (strain ATCC 29328 / DSM 20472 / WAL 2508) (Peptostreptococcus magnus)).